Consider the following 321-residue polypeptide: uncharacterized protein (321 aa).

Residues 1–80 (MQGGQEVGRE…GELSGGWGEF (80 aa)) are disordered.

This is an uncharacterized protein from Mus musculus (Mouse).